Consider the following 107-residue polypeptide: MINVDPPTGNYPATGGNSTHNITSESDSRLAFKVKSSNNEHYRVRPVYGFVDAKGKSKLDINRLPGPPKEDKIVIQYAEVPAEETDPMAPFKAGAQQGEIIVKLIAA.

The disordered stretch occupies residues 1-26 (MINVDPPTGNYPATGGNSTHNITSES). The region spanning 1 to 107 (MINVDPPTGN…GEIIVKLIAA (107 aa)) is the MSP domain. The segment covering 15 to 25 (GGNSTHNITSE) has biased composition (polar residues).

As to expression, expressed at higher level in testis.

In Caenorhabditis elegans, this protein is Sperm-specific class P protein 34 (ssp-34).